The chain runs to 490 residues: Cis-aconitate decarboxylase (490 aa).

The protein belongs to the PrpD family. In terms of assembly, homodimer.

It is found in the mitochondrion. The catalysed reaction is cis-aconitate + H(+) = itaconate + CO2. In terms of biological role, involved in the production of itaconic acid, a soluble unsaturated dicarboxylic acid mainly produced from sugars. This Aspergillus terreus (strain NIH 2624 / FGSC A1156) protein is Cis-aconitate decarboxylase (cad1).